Reading from the N-terminus, the 286-residue chain is Putative thiosulfate sulfurtransferase (286 aa).

The 108-residue stretch at 27-134 (DDPAYRLVEV…WVDNDYPTTD (108 aa)) folds into the Rhodanese 1 domain. Residues Lys-162 and Lys-166 each participate in a glycyl lysine isopeptide (Lys-Gly) (interchain with G-Cter in SAMP2) cross-link. The 120-residue stretch at 164-283 (VDKGLPLVDV…WGNLVGAPVE (120 aa)) folds into the Rhodanese 2 domain. Residue Cys-242 is the Cysteine persulfide intermediate of the active site. Position 247 (Arg-247) interacts with substrate.

The catalysed reaction is thiosulfate + hydrogen cyanide = thiocyanate + sulfite + 2 H(+). Its function is as follows. May be a sulfotransferase involved in the formation of thiosulfate. This chain is Putative thiosulfate sulfurtransferase (tssA), found in Haloferax volcanii (strain ATCC 29605 / DSM 3757 / JCM 8879 / NBRC 14742 / NCIMB 2012 / VKM B-1768 / DS2) (Halobacterium volcanii).